The primary structure comprises 461 residues: Probable tubulin polyglutamylase TTLL9 (461 aa).

The span at methionine 1–lysine 10 shows a compositional bias: polar residues. The tract at residues methionine 1 to arginine 20 is disordered. The region spanning glutamine 22–arginine 402 is the TTL domain. Residues lysine 149 and glutamine 155–glycine 156 each bind ATP. Glutamine 155 contributes to the a protein binding site. Positions arginine 172–aspartate 208 are disordered. The segment covering histidine 198 to aspartate 208 has biased composition (basic and acidic residues). Residues glutamine 218–valine 221 and lysine 231–aspartate 233 contribute to the ATP site. Arginine 257 contacts L-glutamate. Threonine 276 to asparagine 277 is an ATP binding site. Lysine 294 contributes to the L-glutamate binding site. Positions 348, 361, and 363 each coordinate Mg(2+). Lysine 379 is a binding site for L-glutamate.

Belongs to the tubulin--tyrosine ligase family. Mg(2+) serves as cofactor. As to expression, highly expressed in brain and testis. Expressed in heart, kidney and lung. In the brain, expressed in ependymal cilia, cortex, corpus callosum and striatum. In the testis, specifically expressed in the seminiferous tubules.

It is found in the cytoplasm. The protein localises to the cytoskeleton. The protein resides in the cilium basal body. Its subcellular location is the flagellum axoneme. It carries out the reaction (L-glutamyl)(n)-gamma-L-glutamyl-L-glutamyl-[protein] + L-glutamate + ATP = (L-glutamyl)(n+1)-gamma-L-glutamyl-L-glutamyl-[protein] + ADP + phosphate + H(+). In terms of biological role, probable tubulin polyglutamylase that generates side chains of glutamate on the gamma-carboxyl group of specific glutamate residues within the C-terminal tail of target proteins. Similar to TTLL1, may acquire enzymatic activity only in complex with other proteins as it is most likely lacking domains important for autonomous activity. Mediates tubulin polyglutamylation which induces establishment of microtubule heterogeneity in sperm flagella, thereby playing a role in normal motile flagella axoneme structure and sperm flagella beating pattern. The polypeptide is Probable tubulin polyglutamylase TTLL9 (Mus musculus (Mouse)).